Consider the following 329-residue polypeptide: MMEKAMKYAKIAGSGGYLPERVVTNDDLAAELATRQISTSDEWIVERTGIRQRHLAERGVTTSQLATEAARRAMDDAGVQADEIDMIIVATSTPDYVFPSTACLVQANLGAKGGATFDVQAVCSGFVYAMTTADSFIRAGRARCALVIGAEVFSRILDWNDRGTCVLFGDGAGAVVLKAADEPGILAAHLHADGSQTKILCAAGNVAYGDVTGDPFLRMDGQAVFKQAVTVLDRSARDVCAEAGVEVDDIDWLIPHQANVRILNFLARKLRVPTERVVITVDQHANTSAASVPLALDVARRDGRVKPGQLVLMQGVGGGFTWGSVLARM.

Catalysis depends on residues cysteine 123 and histidine 256. The segment at 257–261 (QANVR) is ACP-binding. Asparagine 286 is a catalytic residue.

The protein belongs to the thiolase-like superfamily. FabH family. Homodimer.

The protein resides in the cytoplasm. It catalyses the reaction malonyl-[ACP] + acetyl-CoA + H(+) = 3-oxobutanoyl-[ACP] + CO2 + CoA. Its pathway is lipid metabolism; fatty acid biosynthesis. Its function is as follows. Catalyzes the condensation reaction of fatty acid synthesis by the addition to an acyl acceptor of two carbons from malonyl-ACP. Catalyzes the first condensation reaction which initiates fatty acid synthesis and may therefore play a role in governing the total rate of fatty acid production. Possesses both acetoacetyl-ACP synthase and acetyl transacylase activities. Its substrate specificity determines the biosynthesis of branched-chain and/or straight-chain of fatty acids. This Bordetella parapertussis (strain 12822 / ATCC BAA-587 / NCTC 13253) protein is Beta-ketoacyl-[acyl-carrier-protein] synthase III.